Here is a 770-residue protein sequence, read N- to C-terminus: Semaphorin-4F (770 aa).

The signal sequence occupies residues methionine 1–glycine 34. Topologically, residues arginine 35 to valine 659 are extracellular. A Sema domain is found at arginine 42–threonine 510. Asparagine 64 carries an N-linked (GlcNAc...) asparagine glycan. A disulfide bridge links cysteine 112 with cysteine 122. Asparagine 133 carries N-linked (GlcNAc...) asparagine glycosylation. 3 disulfide bridges follow: cysteine 140–cysteine 149, cysteine 273–cysteine 384, and cysteine 297–cysteine 343. A glycan (N-linked (GlcNAc...) asparagine) is linked at asparagine 509. In terms of domain architecture, PSI spans asparagine 512–proline 563. 3 disulfide bridges follow: cysteine 513/cysteine 530, cysteine 522/cysteine 539, and cysteine 587/cysteine 628. One can recognise an Ig-like C2-type domain in the interval alanine 580–alanine 635. Residues glycine 660–isoleucine 680 form a helical membrane-spanning segment. At glycine 681–isoleucine 770 the chain is on the cytoplasmic side. Positions aspartate 696 to arginine 725 are disordered. Phosphoserine is present on residues serine 718 and serine 720. Residues threonine 768 to isoleucine 770 carry the PDZ-binding motif.

It belongs to the semaphorin family. Interacts (via PDZ-binding motif) with DLG4/SAP90 (via PDZ domain 2); this interaction may promote translocation of DLG4/SAP90 to the membrane.

It is found in the cell membrane. It localises to the postsynaptic density. Its subcellular location is the perikaryon. The protein resides in the cell projection. The protein localises to the dendrite. Probable cell surface receptor that regulates oligodendroglial precursor cell migration. Might also regulate differentiation of oligodendroglial precursor cells. Has growth cone collapse activity against retinal ganglion-cell axons. The polypeptide is Semaphorin-4F (SEMA4F) (Homo sapiens (Human)).